Reading from the N-terminus, the 619-residue chain is Telomere repeat-binding protein 3 (619 aa).

A Ubiquitin-like domain is found at V324 to P403. In terms of domain architecture, HTH myb-type spans A504–S563. The H-T-H motif DNA-binding region spans W532–V559. The interval Q593 to V619 is disordered.

Homodimer and heterodimer with TRP1. In terms of tissue distribution, expressed ubiquitously. Highest expression in flowers and roots.

The protein resides in the nucleus. Functionally, binds specifically to the plant telomeric double-stranded DNA sequences. At least 2 repeats of telomeric sequences are required for binding. Induces DNA bending. The chain is Telomere repeat-binding protein 3 (TRP3) from Arabidopsis thaliana (Mouse-ear cress).